A 293-amino-acid chain; its full sequence is MRVVPLGFESLGVRSMATLIETPDVTVLVDPGVSIPPKRYNLPPSEEEWEALEEVRESIQRAADSADVVTISHYHYDHHTPFTDRKYEACDLETAKELYRDKLILMKHPTENINRSQAGRARALIEGLDELGVDYEFADGKRFEFGETVLEFSQPLPHGPEGTRLGYVLGLRITHRDHVIVHASDVQGPVYGPALEWILERDPDLVLISGPPTYLLGFRFSSDNLEKAVKNLRKLASRSGQIILDHHLLRDKNYRDRLSEVYEESDNVASAAEVLGKEERLLEAYRDELSGEE.

Belongs to the UPF0282 family.

The chain is UPF0282 protein MK0213 from Methanopyrus kandleri (strain AV19 / DSM 6324 / JCM 9639 / NBRC 100938).